The primary structure comprises 89 residues: MAHKKGVGSSRNGRDSESKRLGVKEGDGKFVSAGSILVRQRGTKIYPGDNVGRGGDDTLFAKVDGIVKFERKGRDKKQVSIVVPEVVAQ.

A disordered region spans residues Met1–Gly26. Positions Asn12–Gly26 are enriched in basic and acidic residues.

The protein belongs to the bacterial ribosomal protein bL27 family.

The sequence is that of Large ribosomal subunit protein bL27 from Desulforamulus reducens (strain ATCC BAA-1160 / DSM 100696 / MI-1) (Desulfotomaculum reducens).